Consider the following 341-residue polypeptide: Protein FAM50A (341 aa).

Disordered regions lie at residues 1-27 (MAQY…EREQ) and 80-147 (LVKE…EIEE). Residues 80–115 (LVKEREKQLAKKEQSKELQLKLEKQKEKKRKEEQKR) show a composition bias toward basic and acidic residues. The span at 125 to 147 (DEGEDEEEEEEEEEEEEEDEIEE) shows a compositional bias: acidic residues.

This sequence belongs to the FAM50 family.

The protein localises to the nucleus. In terms of biological role, probably involved in the regulation of pre-mRNA splicing. The sequence is that of Protein FAM50A (fam50a) from Danio rerio (Zebrafish).